We begin with the raw amino-acid sequence, 428 residues long: Gamma-glutamyl phosphate reductase (428 aa).

This sequence belongs to the gamma-glutamyl phosphate reductase family.

It localises to the cytoplasm. It catalyses the reaction L-glutamate 5-semialdehyde + phosphate + NADP(+) = L-glutamyl 5-phosphate + NADPH + H(+). It functions in the pathway amino-acid biosynthesis; L-proline biosynthesis; L-glutamate 5-semialdehyde from L-glutamate: step 2/2. Its function is as follows. Catalyzes the NADPH-dependent reduction of L-glutamate 5-phosphate into L-glutamate 5-semialdehyde and phosphate. The product spontaneously undergoes cyclization to form 1-pyrroline-5-carboxylate. This is Gamma-glutamyl phosphate reductase from Clostridium tetani (strain Massachusetts / E88).